The following is a 479-amino-acid chain: Anaerobic nitric oxide reductase flavorubredoxin (479 aa).

The tract at residues 30–210 (LRGSSYNSYL…PFSRLVTPKI (181 aa)) is zinc metallo-hydrolase. Fe cation is bound by residues His-79, Glu-81, Asp-83, His-147, Asp-166, and His-227. In terms of domain architecture, Flavodoxin-like spans 254 to 393 (ITIFYDTMSN…LCREHGREIA (140 aa)). Residues 260-264 (TMSNN) and 342-369 (AFGSHGWSGGAVDRLSTRLQDAGFEMSL) contribute to the FMN site. In terms of domain architecture, Rubredoxin-like spans 423-474 (GPRMQCSVCQWIYDPAKGEPMQDVAPGTPWSEVPDNFLCPECSLGKDVFEEL). Fe cation-binding residues include Cys-428, Cys-431, Cys-461, and Cys-464.

It in the N-terminal section; belongs to the zinc metallo-hydrolase group 3 family. In terms of assembly, homotetramer. Fe cation is required as a cofactor. The cofactor is FMN.

It localises to the cytoplasm. It functions in the pathway nitrogen metabolism; nitric oxide reduction. In terms of biological role, anaerobic nitric oxide reductase; uses NADH to detoxify nitric oxide (NO), protecting several 4Fe-4S NO-sensitive enzymes. Has at least 2 reductase partners, only one of which (NorW, flavorubredoxin reductase) has been identified. NO probably binds to the di-iron center; electrons enter from the NorW at rubredoxin and are transferred sequentially to the FMN center and the di-iron center. Also able to function as an aerobic oxygen reductase. The protein is Anaerobic nitric oxide reductase flavorubredoxin of Escherichia coli O139:H28 (strain E24377A / ETEC).